A 284-amino-acid polypeptide reads, in one-letter code: Tropomyosin (284 aa).

The disordered stretch occupies residues M1–Q47. Positions M1–Y284 form a coiled coil. A compositionally biased stretch (basic and acidic residues) spans K12–K38.

The protein belongs to the tropomyosin family.

Functionally, tropomyosin, in association with the troponin complex, plays a central role in the calcium dependent regulation of muscle contraction. The sequence is that of Tropomyosin from Trichinella spiralis (Trichina worm).